The following is an 80-amino-acid chain: Metallothionein-like protein type 2 MET1 (80 aa).

It belongs to the metallothionein superfamily. Type 15 family.

Metallothioneins have a high content of cysteine residues that bind various heavy metals. In Fragaria ananassa (Strawberry), this protein is Metallothionein-like protein type 2 MET1 (MET1).